The chain runs to 371 residues: Queuine tRNA-ribosyltransferase (371 aa).

The active-site Proton acceptor is Asp-89. Residues 89-93 (DSGGF), Asp-143, Gln-185, and Gly-212 each bind substrate. The RNA binding stretch occupies residues 243 to 249 (GVGKPED). The Nucleophile role is filled by Asp-262. The RNA binding; important for wobble base 34 recognition stretch occupies residues 267–271 (TRNAR). Positions 300, 302, 305, and 331 each coordinate Zn(2+).

It belongs to the queuine tRNA-ribosyltransferase family. In terms of assembly, homodimer. Within each dimer, one monomer is responsible for RNA recognition and catalysis, while the other monomer binds to the replacement base PreQ1. Zn(2+) serves as cofactor.

The catalysed reaction is 7-aminomethyl-7-carbaguanine + guanosine(34) in tRNA = 7-aminomethyl-7-carbaguanosine(34) in tRNA + guanine. Its pathway is tRNA modification; tRNA-queuosine biosynthesis. Its function is as follows. Catalyzes the base-exchange of a guanine (G) residue with the queuine precursor 7-aminomethyl-7-deazaguanine (PreQ1) at position 34 (anticodon wobble position) in tRNAs with GU(N) anticodons (tRNA-Asp, -Asn, -His and -Tyr). Catalysis occurs through a double-displacement mechanism. The nucleophile active site attacks the C1' of nucleotide 34 to detach the guanine base from the RNA, forming a covalent enzyme-RNA intermediate. The proton acceptor active site deprotonates the incoming PreQ1, allowing a nucleophilic attack on the C1' of the ribose to form the product. After dissociation, two additional enzymatic reactions on the tRNA convert PreQ1 to queuine (Q), resulting in the hypermodified nucleoside queuosine (7-(((4,5-cis-dihydroxy-2-cyclopenten-1-yl)amino)methyl)-7-deazaguanosine). The sequence is that of Queuine tRNA-ribosyltransferase from Azotobacter vinelandii (strain DJ / ATCC BAA-1303).